A 583-amino-acid chain; its full sequence is 2-succinyl-5-enolpyruvyl-6-hydroxy-3-cyclohexene-1-carboxylate synthase (583 aa).

It belongs to the TPP enzyme family. MenD subfamily. As to quaternary structure, homodimer. Mg(2+) serves as cofactor. The cofactor is Mn(2+). Thiamine diphosphate is required as a cofactor.

It carries out the reaction isochorismate + 2-oxoglutarate + H(+) = 5-enolpyruvoyl-6-hydroxy-2-succinyl-cyclohex-3-ene-1-carboxylate + CO2. It functions in the pathway quinol/quinone metabolism; 1,4-dihydroxy-2-naphthoate biosynthesis; 1,4-dihydroxy-2-naphthoate from chorismate: step 2/7. The protein operates within cofactor biosynthesis; phylloquinone biosynthesis. Functionally, catalyzes the thiamine diphosphate-dependent decarboxylation of 2-oxoglutarate and the subsequent addition of the resulting succinic semialdehyde-thiamine pyrophosphate anion to isochorismate to yield 2-succinyl-5-enolpyruvyl-6-hydroxy-3-cyclohexene-1-carboxylate (SEPHCHC). This Trichormus variabilis (strain ATCC 29413 / PCC 7937) (Anabaena variabilis) protein is 2-succinyl-5-enolpyruvyl-6-hydroxy-3-cyclohexene-1-carboxylate synthase.